A 63-amino-acid chain; its full sequence is Bowman-Birk type proteinase inhibitor (63 aa).

7 disulfide bridges follow: Cys-8-Cys-61, Cys-9-Cys-24, Cys-12-Cys-57, Cys-14-Cys-22, Cys-31-Cys-38, Cys-35-Cys-50, and Cys-40-Cys-48.

The protein belongs to the Bowman-Birk serine protease inhibitor family.

In terms of biological role, this inhibitor has two domains, each with separate antiprotease activity. Inhibits bovine trypsin and chymotrypsin, in a molar ratio of 1:1. The trypsin inhibition of FBI is independent of chymotrypsin inhibition, but the chymotrypsin inhibition is not completely independent of trypsin inhibition. The protein is Bowman-Birk type proteinase inhibitor of Vicia faba (Broad bean).